A 119-amino-acid polypeptide reads, in one-letter code: Large ribosomal subunit protein uL18 (119 aa).

The protein belongs to the universal ribosomal protein uL18 family. Part of the 50S ribosomal subunit; part of the 5S rRNA/L5/L18/L25 subcomplex. Contacts the 5S and 23S rRNAs.

Functionally, this is one of the proteins that bind and probably mediate the attachment of the 5S RNA into the large ribosomal subunit, where it forms part of the central protuberance. The chain is Large ribosomal subunit protein uL18 from Cupriavidus necator (strain ATCC 17699 / DSM 428 / KCTC 22496 / NCIMB 10442 / H16 / Stanier 337) (Ralstonia eutropha).